We begin with the raw amino-acid sequence, 419 residues long: MNDLIEKAKKVKEASKKLMNLSENEKNRALSCISQKILEKMDFILQENQKDMENAVSKGIKGALLDRLKLTEDRIKQICKGIEDVIKLPDPVGEVISMWKRPNGLVIGQKRVPIGAIGIIYEARPNVTVDAAVLCLKAGNSVLLRGGSEAINSNVALVKVMKEGLLEAGIEEGSIEIVEDTSRETAIAMMKLNEYLDLLIPRGGANLIKTVVQNATVPVIETGVGNCHVFVDESADFEMAKAIVINAKTQRPGVCNAAEKLLVHKNIAESFLPMIVKELMAKGVEIRGCSKTVEICKKNGIEVKEATEDDWYTEYLDLIIGVKVVDSIDAAIEHINKYGSKHSEAIVTRDYFNAQKFLDYVDAAAVYVNASTRFTDGFEFGFGAEIGISTQKLHARGPMGLKELTTIKYIIYGSGQVRE.

It belongs to the gamma-glutamyl phosphate reductase family.

Its subcellular location is the cytoplasm. The catalysed reaction is L-glutamate 5-semialdehyde + phosphate + NADP(+) = L-glutamyl 5-phosphate + NADPH + H(+). It functions in the pathway amino-acid biosynthesis; L-proline biosynthesis; L-glutamate 5-semialdehyde from L-glutamate: step 2/2. Functionally, catalyzes the NADPH-dependent reduction of L-glutamate 5-phosphate into L-glutamate 5-semialdehyde and phosphate. The product spontaneously undergoes cyclization to form 1-pyrroline-5-carboxylate. The sequence is that of Gamma-glutamyl phosphate reductase from Caldicellulosiruptor bescii (strain ATCC BAA-1888 / DSM 6725 / KCTC 15123 / Z-1320) (Anaerocellum thermophilum).